Reading from the N-terminus, the 57-residue chain is MAVPKKKTSKSKRDKRRATWRHKAAVEAQKALSLGKSILTGRSTFVYPTPEEEDEEE.

Positions methionine 1–lysine 23 are disordered.

It belongs to the bacterial ribosomal protein bL32 family.

This chain is Large ribosomal subunit protein bL32, found in Nostoc sp. (strain PCC 7120 / SAG 25.82 / UTEX 2576).